The sequence spans 338 residues: N-acetyl-gamma-glutamyl-phosphate reductase (338 aa).

The active site involves cysteine 148.

This sequence belongs to the NAGSA dehydrogenase family. Type 1 subfamily.

It localises to the cytoplasm. The catalysed reaction is N-acetyl-L-glutamate 5-semialdehyde + phosphate + NADP(+) = N-acetyl-L-glutamyl 5-phosphate + NADPH + H(+). It participates in amino-acid biosynthesis; L-arginine biosynthesis; N(2)-acetyl-L-ornithine from L-glutamate: step 3/4. Catalyzes the NADPH-dependent reduction of N-acetyl-5-glutamyl phosphate to yield N-acetyl-L-glutamate 5-semialdehyde. The polypeptide is N-acetyl-gamma-glutamyl-phosphate reductase (Leptospira interrogans serogroup Icterohaemorrhagiae serovar copenhageni (strain Fiocruz L1-130)).